The chain runs to 217 residues: 3,4-dihydroxy-2-butanone 4-phosphate synthase (217 aa).

D-ribulose 5-phosphate-binding positions include 37-38 (RE), Asp42, 150-154 (RGGHT), and Glu174. Position 38 (Glu38) interacts with Mg(2+). His153 contacts Mg(2+).

Belongs to the DHBP synthase family. In terms of assembly, homodimer. Requires Mg(2+) as cofactor. It depends on Mn(2+) as a cofactor.

The enzyme catalyses D-ribulose 5-phosphate = (2S)-2-hydroxy-3-oxobutyl phosphate + formate + H(+). Its pathway is cofactor biosynthesis; riboflavin biosynthesis; 2-hydroxy-3-oxobutyl phosphate from D-ribulose 5-phosphate: step 1/1. Functionally, catalyzes the conversion of D-ribulose 5-phosphate to formate and 3,4-dihydroxy-2-butanone 4-phosphate. In Escherichia coli O127:H6 (strain E2348/69 / EPEC), this protein is 3,4-dihydroxy-2-butanone 4-phosphate synthase.